The following is a 157-amino-acid chain: Glycine-rich RNA-binding, abscisic acid-inducible protein (157 aa).

Residues tyrosine 8–serine 86 enclose the RRM domain. Residues asparagine 82–aspartate 157 are disordered. Residues arginine 87–aspartate 157 show a composition bias toward gly residues.

Its function is as follows. Possibly has a role in RNA transcription or processing during stress. This chain is Glycine-rich RNA-binding, abscisic acid-inducible protein (RAB15), found in Zea mays (Maize).